Consider the following 1023-residue polypeptide: Probable histidine kinase 3 (1023 aa).

The Cytoplasmic segment spans residues 1 to 80; the sequence is MDEMSCGGGG…RGWRVVRETW (80 aa). A helical transmembrane segment spans residues 81–101; it reads WWVLLLWILAGSLGSFYLFLF. The Extracellular portion of the chain corresponds to 102-387; that stretch reads MNAQSLDKRR…CRFEKKPPWP (286 aa). A CHASE domain is found at 151–352; sequence TPSAIDQMTF…TNESPISMYG (202 aa). A helical membrane pass occupies residues 388-408; sequence WLAITSSFGTLVIALLTGHIF. Residues 409 to 1023 lie on the Cytoplasmic side of the membrane; it reads QATVHRIAKV…RFFQNHDQVE (615 aa). One can recognise a Histidine kinase domain in the interval 445-715; sequence TVSHEIRTPM…TFTFTAVLMR (271 aa). H448 is subject to Phosphohistidine; by autocatalysis. Response regulatory domains follow at residues 732–854 and 880–1016; these read NALV…RRAL and QIIV…ARFF. A 4-aspartylphosphate modification is found at D783. The interval 812 to 831 is disordered; that stretch reads LFLLGSSASSPKGGSDTSRE. The segment covering 817–827 has biased composition (polar residues); sequence SSASSPKGGSD. D930 carries the post-translational modification 4-aspartylphosphate.

Activation probably requires a transfer of a phosphate group between a His in the transmitter domain and an Asp of the receiver domain. As to expression, highly expressed in young leaves and at lower levels in roots, mature leaves, stems and spikelets.

The protein resides in the cell membrane. The catalysed reaction is ATP + protein L-histidine = ADP + protein N-phospho-L-histidine.. Functionally, cytokinin receptor related to bacterial two-component regulators. Functions as a histidine kinase and transmits the stress signal to a downstream MAPK cascade. This is Probable histidine kinase 3 from Oryza sativa subsp. japonica (Rice).